A 285-amino-acid polypeptide reads, in one-letter code: HTH-type transcriptional regulator MurR (285 aa).

An HTH rpiR-type domain is found at 1–77 (MLYLTKISNA…MALIGEYSAS (77 aa)). A DNA-binding region (H-T-H motif) is located at residues 37–56 (SRQMAKQLGISQSSIVKFAQ). Positions 128-268 (IIEVISKAPF…FVGLVQLNDV (141 aa)) constitute an SIS domain.

As to quaternary structure, homotetramer.

The protein operates within amino-sugar metabolism; N-acetylmuramate degradation [regulation]. Its function is as follows. Represses the expression of the murPQ operon involved in the uptake and degradation of N-acetylmuramic acid (MurNAc). Binds to two adjacent inverted repeats within the operator region. MurNAc 6-phosphate, the substrate of MurQ, is the specific inducer that weakens binding of MurR to the operator. The protein is HTH-type transcriptional regulator MurR of Escherichia coli (strain K12 / MC4100 / BW2952).